An 89-amino-acid chain; its full sequence is Neurotoxin beta-KTx 12 (89 aa).

The first 20 residues, 1–20 (MKQYIFFLALIVLVSTFAEA), serve as a signal peptide directing secretion. Residues 21 to 39 (GKKTEILDKVKKVFSKAKD) constitute a propeptide that is removed on maturation. Residues 53-89 (ELGCPFIDKWCEDHCESKKLVGKCENFDCSCVKLGGK) enclose the BetaSPN-type CS-alpha/beta domain. 3 cysteine pairs are disulfide-bonded: Cys-56/Cys-76, Cys-63/Cys-81, and Cys-67/Cys-83.

The protein belongs to the long chain scorpion toxin family. Class 2 subfamily. As to expression, expressed by the venom gland.

The protein resides in the secreted. Its function is as follows. Inhibits voltage-gated potassium channel. The chain is Neurotoxin beta-KTx 12 from Lychas mucronatus (Chinese swimming scorpion).